Here is a 297-residue protein sequence, read N- to C-terminus: Bifunctional protein FolD 1 (297 aa).

Residues 164–166 (GRS) and Thr-230 contribute to the NADP(+) site.

Belongs to the tetrahydrofolate dehydrogenase/cyclohydrolase family. Homodimer.

The catalysed reaction is (6R)-5,10-methylene-5,6,7,8-tetrahydrofolate + NADP(+) = (6R)-5,10-methenyltetrahydrofolate + NADPH. It carries out the reaction (6R)-5,10-methenyltetrahydrofolate + H2O = (6R)-10-formyltetrahydrofolate + H(+). The protein operates within one-carbon metabolism; tetrahydrofolate interconversion. Functionally, catalyzes the oxidation of 5,10-methylenetetrahydrofolate to 5,10-methenyltetrahydrofolate and then the hydrolysis of 5,10-methenyltetrahydrofolate to 10-formyltetrahydrofolate. This chain is Bifunctional protein FolD 1, found in Rhodococcus jostii (strain RHA1).